Reading from the N-terminus, the 78-residue chain is MSPVAGAKFVRTPLQLYRYLLRCCRLLPSEAMQKHYQHAIRQSYNSHVDEDDPQRIQMIIQRAISDADWILNKYTKKK.

Belongs to the complex I LYR family. LYRM9 subfamily.

This Danio rerio (Zebrafish) protein is LYR motif-containing protein 9 (lyrm9).